Reading from the N-terminus, the 265-residue chain is Secreted RxLR effector protein 16 (265 aa).

A signal peptide spans 1-19 (MRGAFYIAIALLIVRSRTA). Positions 46-61 (RYLRGGLALSATNEER) match the RxLR-dEER motif. Asparagine 170, asparagine 219, and asparagine 240 each carry an N-linked (GlcNAc...) asparagine glycan.

Belongs to the RxLR effector family. N-glycosylated. The putative N-glycosylation site at position 240 is essential for cell death-inducing activity.

It is found in the secreted. It localises to the host nucleus. In terms of biological role, effector that acts as an elicitor that induces cell death and promotes ROS accumulation in Nicotian benthamiana. RxLR16-triggered cell death is dependent on SGT1, HSP90 and RAR1, but independent of the somatic embryogenesis receptor-like kinase SERK3/BAK1, indicating that it acts independently of the detection of cell surface pattern recognition receptors. Enhances the expressional levels of defense-associated genes involved in the salicylic acid-, jasmonate acid-, and ethylene-mediated signal transduction, resulting in disease resistance. However, as some other Plasmopara viticola RxLR effectors including RxLR1, RxLR10, RxLR30 and RxLR25, can suppress defense responses and disease resistance induced by RxLR16, it may not trigger host cell death or immune responses during physiological infection under natural conditions. The chain is Secreted RxLR effector protein 16 from Plasmopara viticola (Downy mildew of grapevine).